The primary structure comprises 348 residues: High mobility group protein 20A (348 aa).

2 disordered regions span residues 1–114 and 181–213; these read MENL…YVRF and SRKAQDRQKGKLHRQDGARQPVHDHEKEADTKE. Polar residues-rich tracts occupy residues 34-47 and 56-71; these read SESSFTGGTSQPVN and SQVQQLQNESTNTAEN. Positions 72–82 are enriched in basic and acidic residues; that stretch reads TEQKPEEEQQR. Residues 83 to 97 show a composition bias toward basic residues; sequence TKRGGWAKGRKRKKP. Residues 104–172 constitute a DNA-binding region (HMG box); sequence PKSPLTGYVR…RYMRELEQYQ (69 aa). Residues 183 to 213 are compositionally biased toward basic and acidic residues; sequence KAQDRQKGKLHRQDGARQPVHDHEKEADTKE. Positions 230–274 form a coiled coil; that stretch reads SKAREAELRQLRKSNMEFEERNAALQKHVESMRTAVEKLEVDVIQ.

The protein localises to the nucleus. Plays a role in neuronal differentiation. In Gallus gallus (Chicken), this protein is High mobility group protein 20A (HMG20A).